The primary structure comprises 492 residues: Serine/threonine-protein kinase 3 (492 aa).

In terms of domain architecture, Protein kinase spans 26-277 (FDVLEKLGEG…ATQLLQHPFI (252 aa)). ATP contacts are provided by residues 32–40 (LGEGSYGSV) and Lys55. Asp145 acts as the Proton acceptor in catalysis. Position 179 is a phosphothreonine; by autocatalysis (Thr179). 2 coiled-coil regions span residues 286-328 (LRDL…TMVK) and 443-476 (NLDF…AKRQ). A compositionally biased stretch (basic and acidic residues) spans 297–307 (KAKRQQEQQRE). The segment at 297 to 339 (KAKRQQEQQRELEEDDENSEEEVEVDSHTMVKSGSESAGTMRA) is disordered. Residues 308-320 (LEEDDENSEEEVE) are compositionally biased toward acidic residues. Residues 326-339 (MVKSGSESAGTMRA) are compositionally biased toward polar residues. An SARAH domain is found at 438 to 485 (FDFLKNLDFEELQMRLTALDPMMEREIEELRQRYTAKRQPILDAMDAK).

The protein belongs to the protein kinase superfamily. STE Ser/Thr protein kinase family. STE20 subfamily. As to quaternary structure, homodimer; mediated via the coiled-coil region. Requires Mg(2+) as cofactor.

Its subcellular location is the cytoplasm. The protein resides in the nucleus. The enzyme catalyses L-seryl-[protein] + ATP = O-phospho-L-seryl-[protein] + ADP + H(+). It catalyses the reaction L-threonyl-[protein] + ATP = O-phospho-L-threonyl-[protein] + ADP + H(+). With respect to regulation, inhibited by the C-terminal non-catalytic region. Activated by caspase-cleavage. Full activation also requires homodimerization and autophosphorylation of Thr-179. In terms of biological role, stress-activated, pro-apoptotic kinase which, following caspase-cleavage, enters the nucleus and induces chromatin condensation followed by internucleosomal DNA fragmentation. Key component of the Hippo signaling pathway which plays a pivotal role in organ size control and tumor suppression by restricting proliferation and promoting apoptosis. The core of this pathway is composed of a kinase cascade wherein stk3/mst2 and stk4/mst1, in complex with its regulatory protein sav1, phosphorylates and activates lats1/2 in complex with its regulatory protein mob1, which in turn phosphorylates and inactivates yap1 oncoprotein and wwtr1/taz. Phosphorylation of yap1 by lats2 inhibits its translocation into the nucleus to regulate cellular genes important for cell proliferation, cell death, and cell migration. The sequence is that of Serine/threonine-protein kinase 3 (stk3) from Danio rerio (Zebrafish).